An 898-amino-acid polypeptide reads, in one-letter code: Putative aconitate hydratase, cytoplasmic (898 aa).

Substrate-binding positions include Q90 and 209-211; that span reads DSH. [4Fe-4S] cluster is bound by residues C441, C507, and C510. Substrate is bound by residues R540, R545, R703, and 784 to 785; that span reads SR.

The protein belongs to the aconitase/IPM isomerase family. Requires [4Fe-4S] cluster as cofactor.

The protein localises to the cytoplasm. The enzyme catalyses citrate = D-threo-isocitrate. Its pathway is carbohydrate metabolism; glyoxylate and dicarboxylate metabolism. Functionally, catalyzes the isomerization of citrate to isocitrate via cis-aconitate. In Oryza sativa subsp. japonica (Rice), this protein is Putative aconitate hydratase, cytoplasmic.